A 353-amino-acid polypeptide reads, in one-letter code: Ribosomal RNA small subunit methyltransferase C (353 aa).

Belongs to the methyltransferase superfamily. RsmC family. As to quaternary structure, monomer.

It is found in the cytoplasm. It catalyses the reaction guanosine(1207) in 16S rRNA + S-adenosyl-L-methionine = N(2)-methylguanosine(1207) in 16S rRNA + S-adenosyl-L-homocysteine + H(+). Functionally, specifically methylates the guanine in position 1207 of 16S rRNA in the 30S particle. In Marinomonas sp. (strain MWYL1), this protein is Ribosomal RNA small subunit methyltransferase C.